Consider the following 142-residue polypeptide: ATP synthase epsilon chain (142 aa).

It belongs to the ATPase epsilon chain family. As to quaternary structure, F-type ATPases have 2 components, CF(1) - the catalytic core - and CF(0) - the membrane proton channel. CF(1) has five subunits: alpha(3), beta(3), gamma(1), delta(1), epsilon(1). CF(0) has three main subunits: a, b and c.

It is found in the cell inner membrane. Functionally, produces ATP from ADP in the presence of a proton gradient across the membrane. The protein is ATP synthase epsilon chain of Shewanella woodyi (strain ATCC 51908 / MS32).